Here is a 732-residue protein sequence, read N- to C-terminus: Elongation factor 2 (732 aa).

The 242-residue stretch at 19–260 (ERIRNIDIAA…MVIKNLPNPR (242 aa)) folds into the tr-type G domain. GTP-binding positions include 28 to 35 (AHIDHGKT), 94 to 98 (DTPGH), and 148 to 151 (NKVD). The residue at position 598 (His598) is a Diphthamide.

Belongs to the TRAFAC class translation factor GTPase superfamily. Classic translation factor GTPase family. EF-G/EF-2 subfamily.

It is found in the cytoplasm. Functionally, catalyzes the GTP-dependent ribosomal translocation step during translation elongation. During this step, the ribosome changes from the pre-translocational (PRE) to the post-translocational (POST) state as the newly formed A-site-bound peptidyl-tRNA and P-site-bound deacylated tRNA move to the P and E sites, respectively. Catalyzes the coordinated movement of the two tRNA molecules, the mRNA and conformational changes in the ribosome. The protein is Elongation factor 2 of Picrophilus torridus (strain ATCC 700027 / DSM 9790 / JCM 10055 / NBRC 100828 / KAW 2/3).